The chain runs to 432 residues: Gamma-glutamyl phosphate reductase (432 aa).

It belongs to the gamma-glutamyl phosphate reductase family.

The protein resides in the cytoplasm. The enzyme catalyses L-glutamate 5-semialdehyde + phosphate + NADP(+) = L-glutamyl 5-phosphate + NADPH + H(+). Its pathway is amino-acid biosynthesis; L-proline biosynthesis; L-glutamate 5-semialdehyde from L-glutamate: step 2/2. Catalyzes the NADPH-dependent reduction of L-glutamate 5-phosphate into L-glutamate 5-semialdehyde and phosphate. The product spontaneously undergoes cyclization to form 1-pyrroline-5-carboxylate. In Brachyspira hyodysenteriae (strain ATCC 49526 / WA1), this protein is Gamma-glutamyl phosphate reductase.